The sequence spans 239 residues: Phosducin-like protein 3 (239 aa).

The residue at position 1 (Met1) is an N-acetylmethionine. In terms of domain architecture, Phosducin spans 32–180 (EAEEEQRILQ…EGDIKAQFIG (149 aa)). Position 43 is a phosphoserine (Ser43). The segment at 91–239 (FGEVLEISGK…MKRDSDSEGD (149 aa)) is thioredoxin fold. 2 interaction with XIAP regions span residues 97 to 99 (ISG) and 153 to 155 (TCI). A phosphoserine mark is found at Ser234 and Ser236.

This sequence belongs to the phosducin family. Interacts (via thioredoxin fold region) with KDR/VEGFR2 (via juxtamembrane domain). Forms ternary complexes with the chaperonin CCT complex and actin substrate, leading to inhibition of actin folding. Interacts with XIAP (via BIR 3 and RING domain). Interacts with HSP90AA1 and HSP90AB1. N-terminal methionine acetylation destabilizes the protein. In terms of tissue distribution, expressed in endothelial cells (at protein level). Expressed in all tissues examined including spleen, thymus, prostate, testis, ovary, small intestine and colon.

It localises to the cytoplasm. Its subcellular location is the perinuclear region. The protein resides in the endoplasmic reticulum. Functionally, acts as a chaperone for the angiogenic VEGF receptor KDR/VEGFR2, increasing its abundance by inhibiting its ubiquitination and degradation. Inhibits the folding activity of the chaperonin-containing T-complex (CCT) which leads to inhibition of cytoskeletal actin folding. Acts as a chaperone during heat shock alongside HSP90 and HSP40/70 chaperone complexes. Modulates the activation of caspases during apoptosis. This is Phosducin-like protein 3 (PDCL3) from Homo sapiens (Human).